Here is a 283-residue protein sequence, read N- to C-terminus: Probable endonuclease 4 (283 aa).

Positions 66, 106, 141, 174, 177, 211, 224, 226, and 256 each coordinate Zn(2+).

This sequence belongs to the AP endonuclease 2 family. The cofactor is Zn(2+).

It catalyses the reaction Endonucleolytic cleavage to 5'-phosphooligonucleotide end-products.. Functionally, endonuclease IV plays a role in DNA repair. It cleaves phosphodiester bonds at apurinic or apyrimidinic (AP) sites, generating a 3'-hydroxyl group and a 5'-terminal sugar phosphate. In Carboxydothermus hydrogenoformans (strain ATCC BAA-161 / DSM 6008 / Z-2901), this protein is Probable endonuclease 4.